A 241-amino-acid polypeptide reads, in one-letter code: Translation initiation factor IF-3 (241 aa).

Basic and acidic residues predominate over residues 193–203 (AAEKARQKAIQ). Residues 193 to 241 (AAEKARQKAIQEGRAAPAQDDTEDEEIEKLERELEEQDDEDDDEAEATE) are disordered. Over residues 212 to 241 (DDTEDEEIEKLERELEEQDDEDDDEAEATE) the composition is skewed to acidic residues.

It belongs to the IF-3 family. In terms of assembly, monomer.

Its subcellular location is the cytoplasm. Its function is as follows. IF-3 binds to the 30S ribosomal subunit and shifts the equilibrium between 70S ribosomes and their 50S and 30S subunits in favor of the free subunits, thus enhancing the availability of 30S subunits on which protein synthesis initiation begins. The sequence is that of Translation initiation factor IF-3 from Sorangium cellulosum (strain So ce56) (Polyangium cellulosum (strain So ce56)).